Consider the following 329-residue polypeptide: 4-hydroxythreonine-4-phosphate dehydrogenase (329 aa).

Residues His-136 and Thr-137 each contribute to the substrate site. Residues His-166, His-211, and His-266 each contribute to the a divalent metal cation site. Residues Lys-274, Asn-283, and Arg-292 each contribute to the substrate site.

It belongs to the PdxA family. As to quaternary structure, homodimer. It depends on Zn(2+) as a cofactor. Mg(2+) serves as cofactor. The cofactor is Co(2+).

It localises to the cytoplasm. The catalysed reaction is 4-(phosphooxy)-L-threonine + NAD(+) = 3-amino-2-oxopropyl phosphate + CO2 + NADH. It functions in the pathway cofactor biosynthesis; pyridoxine 5'-phosphate biosynthesis; pyridoxine 5'-phosphate from D-erythrose 4-phosphate: step 4/5. Catalyzes the NAD(P)-dependent oxidation of 4-(phosphooxy)-L-threonine (HTP) into 2-amino-3-oxo-4-(phosphooxy)butyric acid which spontaneously decarboxylates to form 3-amino-2-oxopropyl phosphate (AHAP). This is 4-hydroxythreonine-4-phosphate dehydrogenase from Citrobacter koseri (strain ATCC BAA-895 / CDC 4225-83 / SGSC4696).